The sequence spans 1068 residues: Carbamoyl phosphate synthase large chain (1068 aa).

Positions 1-401 (MPRNNDIKKV…ALMKAIRSLE (401 aa)) are carboxyphosphate synthetic domain. 12 residues coordinate ATP: Arg129, Arg169, Gly175, Gly176, Arg208, Ile210, Glu215, Gly241, Val242, His243, Gln284, and Glu298. Positions 133 to 327 (KDTMEKIGEP…IAKVTAKIAL (195 aa)) constitute an ATP-grasp 1 domain. Residues Gln284, Glu298, and Asn300 each coordinate Mg(2+). Residues Gln284, Glu298, and Asn300 each contribute to the Mn(2+) site. Positions 402–546 (QHVDSLMSYD…YSVFGSENEA (145 aa)) are oligomerization domain. A carbamoyl phosphate synthetic domain region spans residues 547 to 930 (AETNPQKKVL…ALYKAFEGAG (384 aa)). The region spanning 672–862 (DEILQKTGIP…IVDLAARIIM (191 aa)) is the ATP-grasp 2 domain. 10 residues coordinate ATP: Arg708, Lys747, Leu749, Glu753, Gly778, Val779, His780, Ser781, Gln821, and Glu833. Gln821, Glu833, and Asn835 together coordinate Mg(2+). Mn(2+) contacts are provided by Gln821, Glu833, and Asn835. The MGS-like domain maps to 931 to 1068 (VELPKYKQMI…PVDIATVKNL (138 aa)). Residues 931–1068 (VELPKYKQMI…PVDIATVKNL (138 aa)) are allosteric domain.

The protein belongs to the CarB family. In terms of assembly, composed of two chains; the small (or glutamine) chain promotes the hydrolysis of glutamine to ammonia, which is used by the large (or ammonia) chain to synthesize carbamoyl phosphate. Tetramer of heterodimers (alpha,beta)4. Mg(2+) serves as cofactor. The cofactor is Mn(2+).

The catalysed reaction is hydrogencarbonate + L-glutamine + 2 ATP + H2O = carbamoyl phosphate + L-glutamate + 2 ADP + phosphate + 2 H(+). It carries out the reaction hydrogencarbonate + NH4(+) + 2 ATP = carbamoyl phosphate + 2 ADP + phosphate + 2 H(+). Its pathway is amino-acid biosynthesis; L-arginine biosynthesis; carbamoyl phosphate from bicarbonate: step 1/1. It participates in pyrimidine metabolism; UMP biosynthesis via de novo pathway; (S)-dihydroorotate from bicarbonate: step 1/3. Its function is as follows. Large subunit of the glutamine-dependent carbamoyl phosphate synthetase (CPSase). CPSase catalyzes the formation of carbamoyl phosphate from the ammonia moiety of glutamine, carbonate, and phosphate donated by ATP, constituting the first step of 2 biosynthetic pathways, one leading to arginine and/or urea and the other to pyrimidine nucleotides. The large subunit (synthetase) binds the substrates ammonia (free or transferred from glutamine from the small subunit), hydrogencarbonate and ATP and carries out an ATP-coupled ligase reaction, activating hydrogencarbonate by forming carboxy phosphate which reacts with ammonia to form carbamoyl phosphate. This Agathobacter rectalis (strain ATCC 33656 / DSM 3377 / JCM 17463 / KCTC 5835 / VPI 0990) (Eubacterium rectale) protein is Carbamoyl phosphate synthase large chain.